A 126-amino-acid polypeptide reads, in one-letter code: uncharacterized protein (126 aa).

Residues 83 to 126 (VPPPLDRSHESPEEFFPPQNRNRGGGPKAQIQRHPPEALEKTTH) are disordered. Over residues 116-126 (HPPEALEKTTH) the composition is skewed to basic and acidic residues.

This is an uncharacterized protein from Galliformes (FAdV-1).